The sequence spans 385 residues: MMKIAATLLATIALATVNALDNGLALTPQMGWSSWNFYACNINESVIMNTAKAMVSNGMADAGYTYVNIDDCWAGGRYPNGTVYADPTNFPNGIKYVADYIHSLGLKIGIYTDAGTETCQKRVGSYGYEANDAQTYAEWGIDYVKEDWCYATLENPQQRYQIMSQALNATGRPMFFSLCDWGYENPWTFGMSVGNSWRTTPDIKDNWDSMLSNLMAQAPITSFSGIGGFNDPDMMMVGNGGMSNTEYVSHFSLWSLLNAPLIAGCDLIDIDQETLSILTASEVIAINQDPLGVQGSLVKSYNGGLQQIWAKPLSNGARAVVLFNTDTNPATIELLWGNIWMEPSQQLSIRNLWTQTNLGTFTESYESDSLIPPHGCIMLTLTPTN.

Positions M1 to A19 are cleaved as a signal peptide. Cystine bridges form between C40-C72 and C119-C149. D147 acts as the Nucleophile in catalysis. Residue D180 to E184 coordinates substrate. The active-site Proton donor is D202.

This sequence belongs to the glycosyl hydrolase 27 family.

The catalysed reaction is Hydrolysis of terminal, non-reducing alpha-D-galactose residues in alpha-D-galactosides, including galactose oligosaccharides, galactomannans and galactolipids.. The chain is Probable alpha-galactosidase (melA) from Dictyostelium discoideum (Social amoeba).